The chain runs to 59 residues: Amyloid-beta precursor protein (59 aa).

Topologically, residues 1–34 (ISEVKMDAEFRHDSGYEVHHQKLVFFAEDVGSNK) are extracellular. The chain crosses the membrane as a helical span at residues 35–58 (GAIIGLMVGGVVIATVIVITLVML). A topological domain (cytoplasmic) is located at residue Lys59.

The protein belongs to the APP family. As to quaternary structure, binds, via its C-terminus, to the PID domain of several cytoplasmic proteins, including APBB family members, the APBA family, MAPK8IP1, SHC1 and NUMB and DAB1. Binding to DAB1 inhibits its serine phosphorylation. Interacts (via NPXY motif) with DAB2 (via PID domain); the interaction is impaired by tyrosine phosphorylation of the NPXY motif. Also interacts with GPCR-like protein BPP, APPBP1, IB1, KNS2 (via its TPR domains), APPBP2 (via BaSS) and DDB1. In vitro, it binds MAPT via the MT-binding domains. Associates with microtubules in the presence of ATP and in a kinesin-dependent manner. Interacts, through a C-terminal domain, with GNAO1. Interacts with CPEB1, ANKS1B and AGER. Interacts with ITM2B. Interacts with ITM2C. Interacts with IDE. Can form homodimers; dimerization is enhanced in the presence of Cu(2+) ions. Can form homodimers; this is promoted by heparin binding. Interacts with SORL1 (via N-terminal ectodomain); this interaction retains APP in the trans-Golgi network and reduces processing into soluble APP-alpha and amyloid-beta peptides. Interacts with PLD3. Interacts with VDAC1. Interacts with NSG1; could regulate APP processing. Amyloid-beta protein 42 interacts with FPR2. Interacts with LRRK2. Interacts (via cytoplasmic domain) with KIF5B. Interacts (via C-terminus) with APBB2/FE65L1 (via C-terminus). Interacts (via intracellular domain) with APBB3. In terms of processing, proteolytically processed under normal cellular conditions. Cleavage either by alpha-secretase, beta-secretase or theta-secretase leads to generation and extracellular release of soluble APP peptides, S-APP-alpha and S-APP-beta, and the retention of corresponding membrane-anchored C-terminal fragments, C80, C83 and C99. Subsequent processing of C80 and C83 by gamma-secretase yields P3 peptides. This is the major secretory pathway and is non-amyloidogenic. Alternatively, presenilin/nicastrin-mediated gamma-secretase processing of C99 releases the amyloid-beta proteins, amyloid-beta protein 40 and amyloid-beta protein 42, major components of amyloid plaques, and the cytotoxic C-terminal fragments, gamma-CTF(50), gamma-CTF(57) and gamma-CTF(59). PSEN1 cleavage is more efficient with C83 than with C99 as substrate (in vitro). Amyloid-beta protein 40 and Amyloid-beta protein 42 are cleaved by ACE. Many other minor amyloid-beta peptides, amyloid-beta 1-X peptides, are found in cerebral spinal fluid (CSF) including the amyloid-beta X-15 peptides, produced from the cleavage by alpha-secretase.

The protein localises to the cell membrane. It is found in the membrane. The protein resides in the perikaryon. Its subcellular location is the cell projection. It localises to the growth cone. The protein localises to the clathrin-coated pit. It is found in the early endosome. The protein resides in the cytoplasmic vesicle. Its subcellular location is the secreted. It localises to the cell surface. The protein localises to the nucleus. It is found in the cytoplasm. In terms of biological role, functions as a cell surface receptor and performs physiological functions on the surface of neurons relevant to neurite growth, neuronal adhesion and axonogenesis. Interaction between APP molecules on neighboring cells promotes synaptogenesis. Involved in cell mobility and transcription regulation through protein-protein interactions. Can promote transcription activation through binding to APBB1-KAT5 and inhibit Notch signaling through interaction with Numb. Couples to apoptosis-inducing pathways such as those mediated by G(o) and JIP. Inhibits G(o)-alpha ATPase activity. Acts as a kinesin I membrane receptor, mediating the axonal transport of beta-secretase and presenilin 1. By acting as a kinesin I membrane receptor, plays a role in axonal anterograde transport of cargo towards synapses in axons. May be involved in copper homeostasis/oxidative stress through copper ion reduction. In vitro, copper-metallated APP induces neuronal death directly or is potentiated through Cu(2+)-mediated low-density lipoprotein oxidation. Can regulate neurite outgrowth through binding to components of the extracellular matrix such as heparin and collagen I and IV. Induces a AGER-dependent pathway that involves activation of p38 MAPK, resulting in internalization of amyloid-beta peptide and mitochondrial dysfunction in cultured cortical neurons. Provides Cu(2+) ions for GPC1 which are required for release of nitric oxide (NO) and subsequent degradation of the heparan sulfate chains on GPC1. The protein is Amyloid-beta precursor protein (APP) of Bos taurus (Bovine).